Here is a 241-residue protein sequence, read N- to C-terminus: 4-hydroxy-tetrahydrodipicolinate reductase (241 aa).

NAD(+)-binding positions include 7 to 12 (GVNGHM), 74 to 76 (GTT), and 98 to 101 (STNM). Residue H131 is the Proton donor/acceptor of the active site. A (S)-2,3,4,5-tetrahydrodipicolinate-binding site is contributed by H132. The active-site Proton donor is the K135. 141 to 142 (GS) is a (S)-2,3,4,5-tetrahydrodipicolinate binding site.

The protein belongs to the DapB family.

It localises to the cytoplasm. The enzyme catalyses (S)-2,3,4,5-tetrahydrodipicolinate + NAD(+) + H2O = (2S,4S)-4-hydroxy-2,3,4,5-tetrahydrodipicolinate + NADH + H(+). It carries out the reaction (S)-2,3,4,5-tetrahydrodipicolinate + NADP(+) + H2O = (2S,4S)-4-hydroxy-2,3,4,5-tetrahydrodipicolinate + NADPH + H(+). Its pathway is amino-acid biosynthesis; L-lysine biosynthesis via DAP pathway; (S)-tetrahydrodipicolinate from L-aspartate: step 4/4. Its function is as follows. Catalyzes the conversion of 4-hydroxy-tetrahydrodipicolinate (HTPA) to tetrahydrodipicolinate. In Alkaliphilus oremlandii (strain OhILAs) (Clostridium oremlandii (strain OhILAs)), this protein is 4-hydroxy-tetrahydrodipicolinate reductase.